A 329-amino-acid chain; its full sequence is DNA-directed RNA polymerase subunit alpha (329 aa).

The segment at 1–231 (MQNSLLKPKA…EQLAVFAQLE (231 aa)) is alpha N-terminal domain (alpha-NTD). The tract at residues 249-329 (FDPILLRPVD…SWPPAALEKR (81 aa)) is alpha C-terminal domain (alpha-CTD).

This sequence belongs to the RNA polymerase alpha chain family. Homodimer. The RNAP catalytic core consists of 2 alpha, 1 beta, 1 beta' and 1 omega subunit. When a sigma factor is associated with the core the holoenzyme is formed, which can initiate transcription.

The catalysed reaction is RNA(n) + a ribonucleoside 5'-triphosphate = RNA(n+1) + diphosphate. Functionally, DNA-dependent RNA polymerase catalyzes the transcription of DNA into RNA using the four ribonucleoside triphosphates as substrates. The polypeptide is DNA-directed RNA polymerase subunit alpha (Albidiferax ferrireducens (strain ATCC BAA-621 / DSM 15236 / T118) (Rhodoferax ferrireducens)).